A 258-amino-acid polypeptide reads, in one-letter code: Phosphoribosylaminoimidazole-succinocarboxamide synthase (258 aa).

It belongs to the SAICAR synthetase family.

The enzyme catalyses 5-amino-1-(5-phospho-D-ribosyl)imidazole-4-carboxylate + L-aspartate + ATP = (2S)-2-[5-amino-1-(5-phospho-beta-D-ribosyl)imidazole-4-carboxamido]succinate + ADP + phosphate + 2 H(+). It participates in purine metabolism; IMP biosynthesis via de novo pathway; 5-amino-1-(5-phospho-D-ribosyl)imidazole-4-carboxamide from 5-amino-1-(5-phospho-D-ribosyl)imidazole-4-carboxylate: step 1/2. The protein is Phosphoribosylaminoimidazole-succinocarboxamide synthase of Maricaulis maris (strain MCS10) (Caulobacter maris).